The following is a 255-amino-acid chain: Phosphate import ATP-binding protein PstB (255 aa).

Positions 8–250 (IKSSNLNVHY…PGNKMTQDYI (243 aa)) constitute an ABC transporter domain. Position 40–47 (40–47 (GPSGCGKS)) interacts with ATP.

Belongs to the ABC transporter superfamily. Phosphate importer (TC 3.A.1.7) family. In terms of assembly, the complex is composed of two ATP-binding proteins (PstB), two transmembrane proteins (PstC and PstA) and a solute-binding protein (PstS).

Its subcellular location is the cell inner membrane. It carries out the reaction phosphate(out) + ATP + H2O = ADP + 2 phosphate(in) + H(+). In terms of biological role, part of the ABC transporter complex PstSACB involved in phosphate import. Responsible for energy coupling to the transport system. This Pelagibacter ubique (strain HTCC1062) protein is Phosphate import ATP-binding protein PstB.